The primary structure comprises 460 residues: Ribosomal protein uS12 methylthiotransferase RimO (460 aa).

Residues methionine 18–arginine 134 form the MTTase N-terminal domain. Cysteine 27, cysteine 63, cysteine 97, cysteine 171, cysteine 175, and cysteine 178 together coordinate [4Fe-4S] cluster. The Radical SAM core domain maps to serine 157 to serine 387. Residues glutamine 390–aspartate 456 enclose the TRAM domain.

This sequence belongs to the methylthiotransferase family. RimO subfamily. [4Fe-4S] cluster serves as cofactor.

The protein resides in the cytoplasm. It catalyses the reaction L-aspartate(89)-[ribosomal protein uS12]-hydrogen + (sulfur carrier)-SH + AH2 + 2 S-adenosyl-L-methionine = 3-methylsulfanyl-L-aspartate(89)-[ribosomal protein uS12]-hydrogen + (sulfur carrier)-H + 5'-deoxyadenosine + L-methionine + A + S-adenosyl-L-homocysteine + 2 H(+). Catalyzes the methylthiolation of an aspartic acid residue of ribosomal protein uS12. This chain is Ribosomal protein uS12 methylthiotransferase RimO, found in Heliobacterium modesticaldum (strain ATCC 51547 / Ice1).